A 214-amino-acid polypeptide reads, in one-letter code: Ras-related protein RABA5c (214 aa).

19–26 (GDSAVGKS) is a binding site for GTP. The Effector region motif lies at 41-49 (SKATIGVEF). GTP contacts are provided by residues 67–71 (DTAGQ), 125–128 (NKCD), and 155–156 (SA). 2 S-geranylgeranyl cysteine lipidation sites follow: Cys-211 and Cys-212.

The protein belongs to the small GTPase superfamily. Rab family. As to quaternary structure, interacts (via C-terminus) with GDI1. Interacts with PUX8/SAY1. Expressed in roots and actively dividing cells.

It is found in the golgi apparatus membrane. The protein resides in the golgi apparatus. The protein localises to the trans-Golgi network membrane. It localises to the cell membrane. In terms of biological role, intracellular vesicle trafficking and protein transport. Binds GTP and GDP and possesses intrinsic GTPase activity. This is Ras-related protein RABA5c (RABA5C) from Arabidopsis thaliana (Mouse-ear cress).